The following is a 283-amino-acid chain: Tetraspanin-33 (283 aa).

The Cytoplasmic segment spans residues 1–24 (MARRPRAPAASGEEFSFVSPLVKY). A helical membrane pass occupies residues 25–45 (LLFFFNMLFWVISMVMVAVGV). At 46–64 (YARLMKHAEAALACLAVDP) the chain is on the extracellular side. The chain crosses the membrane as a helical span at residues 65–85 (AILLIVVGVLMFLLTFCGCIG). Over 86–96 (SLRENICLLQT) the chain is Cytoplasmic. The chain crosses the membrane as a helical span at residues 97-117 (FSLCLTAVFLLQLAAGILGFV). Over 118-235 (FSDKARGKVS…DKLVNWIHSN (118 aa)) the chain is Extracellular. 4 disulfides stabilise this stretch: cysteine 156/cysteine 224, cysteine 157/cysteine 189, cysteine 173/cysteine 183, and cysteine 190/cysteine 203. A glycan (N-linked (GlcNAc...) asparagine) is linked at asparagine 172. The chain crosses the membrane as a helical span at residues 236-256 (LFLLGGVALGLAIPQLVGILL). Over 257–283 (SQILVNQIKDQIKLQLYNQQHRADPWY) the chain is Cytoplasmic.

Belongs to the tetraspanin (TM4SF) family. As to quaternary structure, homodimer; disulfide-linked. Interacts (via extracellular domain) with ADAM10 (via extracellular domain). Interacts (via cytoplasmic domain) with PLEKHA7 (via WW domains); the interaction is dependent on PDZD11 being bound to PLEKHA7 and facilitates the docking of ADAM10 to zonula adherens. Predominantly expressed in erythroblasts.

Its subcellular location is the cell membrane. It localises to the cell junction. The protein resides in the adherens junction. It is found in the cytoplasm. Part of TspanC8 subgroup, composed of 6 members that interact with the transmembrane metalloprotease ADAM10. This interaction is required for ADAM10 exit from the endoplasmic reticulum and for enzymatic maturation and trafficking to the cell surface as well as substrate specificity. Different TspanC8/ADAM10 complexes have distinct substrates. Plays an important role in normal erythropoiesis. It has a role in the differentiation of erythroid progenitors. Negatively regulates ligand-induced Notch activity probably by regulating ADAM10 activity. Mediates docking of ADAM10 to zonula adherens by interacting with ADAM10 and, in a PDZD11-dependent manner, with the zonula adherens protein PLEKHA7. The chain is Tetraspanin-33 from Homo sapiens (Human).